A 73-amino-acid polypeptide reads, in one-letter code: MQIKHLITLFFLVLIGADQCSAFFSLIPSLIGGLVFAIKGRKKREVSPQIDQYRNFQKREAELEELLDRLPMY.

An N-terminal signal peptide occupies residues 1-22 (MQIKHLITLFFLVLIGADQCSA). Positions 45 to 73 (EVSPQIDQYRNFQKREAELEELLDRLPMY) are excised as a propeptide.

The protein belongs to the non-disulfide-bridged peptide (NDBP) superfamily. Short antimicrobial peptide (group 4) family. Expressed by the venom gland.

Its subcellular location is the secreted. Its function is as follows. Antibacterial peptide. The polypeptide is Putative antimicrobial peptide clone 5 (Tityus costatus (Brazilian scorpion)).